A 267-amino-acid chain; its full sequence is Pyridoxine 5'-phosphate synthase (267 aa).

Asn8 is a binding site for 3-amino-2-oxopropyl phosphate. 10-11 contributes to the 1-deoxy-D-xylulose 5-phosphate binding site; the sequence is DH. Arg19 serves as a coordination point for 3-amino-2-oxopropyl phosphate. His44 serves as the catalytic Proton acceptor. Residues Arg46 and His51 each contribute to the 1-deoxy-D-xylulose 5-phosphate site. Residue Glu71 is the Proton acceptor of the active site. Thr101 serves as a coordination point for 1-deoxy-D-xylulose 5-phosphate. His219 (proton donor) is an active-site residue. 3-amino-2-oxopropyl phosphate-binding positions include Gly220 and 241 to 242; that span reads GH.

It belongs to the PNP synthase family. As to quaternary structure, homooctamer; tetramer of dimers.

Its subcellular location is the cytoplasm. The enzyme catalyses 3-amino-2-oxopropyl phosphate + 1-deoxy-D-xylulose 5-phosphate = pyridoxine 5'-phosphate + phosphate + 2 H2O + H(+). It functions in the pathway cofactor biosynthesis; pyridoxine 5'-phosphate biosynthesis; pyridoxine 5'-phosphate from D-erythrose 4-phosphate: step 5/5. Catalyzes the complicated ring closure reaction between the two acyclic compounds 1-deoxy-D-xylulose-5-phosphate (DXP) and 3-amino-2-oxopropyl phosphate (1-amino-acetone-3-phosphate or AAP) to form pyridoxine 5'-phosphate (PNP) and inorganic phosphate. This is Pyridoxine 5'-phosphate synthase from Helicobacter hepaticus (strain ATCC 51449 / 3B1).